A 1099-amino-acid chain; its full sequence is Solute carrier family 38 member 10 (1099 aa).

10 consecutive transmembrane segments (helical) span residues 9-31 (WGLV…PFCF), 36-58 (IVLG…MFLV), 84-104 (LVET…YVVI), 123-143 (TFRV…LSLQ), 153-173 (FSAM…LSSF), 229-249 (IFAS…FFGY), 272-292 (MIRV…ILPC), 323-343 (VLTL…PNVE), 345-365 (ILGF…PALI), and 378-398 (VVLW…LSVS). 2 disordered regions span residues 440–679 (DSQE…EEAG) and 720–1047 (EIRQ…LAPK). Ser-441 is subject to Phosphoserine. Composition is skewed to basic and acidic residues over residues 441–454 (SQEK…KEVL), 493–508 (EAHR…KVVV), 517–528 (PEEKKPPPKLPD), 544–561 (ESEK…KRPE), and 586–599 (PRKE…RDLH). 2 positions are modified to phosphoserine: Ser-607 and Ser-635. Basic and acidic residues-rich tracts occupy residues 653-663 (EAAEQREKNEA), 720-735 (EIRQ…KPKP), and 749-766 (GQEE…HAGE). Positions 698 to 734 (VQQKRLLDQQEKLLAVIEEQHKEIRQQRQEGEEDKPK) form a coiled coil. Thr-767 is modified (phosphothreonine). 5 stretches are compositionally biased toward basic and acidic residues: residues 793 to 802 (KGQHPLEEVK), 852 to 894 (EPVH…ETGK), 917 to 928 (EDSHSKSRHSEP), 957 to 969 (KSQD…RSEG), and 1010 to 1022 (QKPE…RDLK). Position 886 is a phosphoserine (Ser-886).

It belongs to the amino acid/polyamine transporter 2 family. In terms of tissue distribution, only expressed in the pituitary, adrenal gland, stomach and in the upper gastrointestinal tract.

It localises to the membrane. It catalyses the reaction L-glutamate(out) = L-glutamate(in). It carries out the reaction L-glutamine(out) = L-glutamine(in). The enzyme catalyses L-alanine(in) = L-alanine(out). The catalysed reaction is L-serine(in) = L-serine(out). It catalyses the reaction L-leucine(in) = L-leucine(out). Facilitates bidirectional transport of amino acids. May act as a glutamate sensor that regulates glutamate-glutamine cycle and mTOR signaling in the brain. The transport mechanism remains to be elucidated. The chain is Solute carrier family 38 member 10 from Rattus norvegicus (Rat).